A 1285-amino-acid chain; its full sequence is Peroxisomal ATPase PEX1 (1285 aa).

Over residues 344-353 (QQGKTKQSVM) the composition is skewed to polar residues. The interval 344-373 (QQGKTKQSVMSPEKEKHPLESPNHKQIGSD) is disordered. Position 354 is a phosphoserine (Ser354). Over residues 355-373 (PEKEKHPLESPNHKQIGSD) the composition is skewed to basic and acidic residues. Residues 601 to 608 (GGKGSGKS) and 883 to 890 (GPPGTGKT) contribute to the ATP site. Residues 1142 to 1161 (NGTSSDLSSQCPSAPSSVTQ) show a composition bias toward polar residues. The disordered stretch occupies residues 1142-1162 (NGTSSDLSSQCPSAPSSVTQD). 3 positions are modified to phosphoserine: Ser1183, Ser1211, and Ser1213. Residues 1262-1285 (FQNPKKRKNPSGTVFRPGQKVTLA) are disordered.

It belongs to the AAA ATPase family. In terms of assembly, homooligomer; homooligomerizes in the cytosol, interaction with PEX6 promotes dissociation of the homooligomer. Interacts with PEX6; forming the PEX1-PEX6 AAA ATPase complex, which is composed of a heterohexamer formed by a trimer of PEX1-PEX6 dimers. Interacts indirectly with PEX26, via its interaction with PEX6.

The protein resides in the cytoplasm. Its subcellular location is the cytosol. The protein localises to the peroxisome membrane. It carries out the reaction ATP + H2O = ADP + phosphate + H(+). Functionally, component of the PEX1-PEX6 AAA ATPase complex, a protein dislocase complex that mediates the ATP-dependent extraction of the PEX5 receptor from peroxisomal membranes, an essential step for PEX5 recycling. Specifically recognizes PEX5 monoubiquitinated at 'Cys-11', and pulls it out of the peroxisome lumen through the PEX2-PEX10-PEX12 retrotranslocation channel. Extraction by the PEX1-PEX6 AAA ATPase complex is accompanied by unfolding of the TPR repeats and release of bound cargo from PEX5. The chain is Peroxisomal ATPase PEX1 from Cricetulus griseus (Chinese hamster).